Here is a 95-residue protein sequence, read N- to C-terminus: Putative ESAT-6-like protein X (95 aa).

A disordered region spans residues 72-95 (HGQKVQRASSSMADTDRSVSSAWS).

Belongs to the WXG100 family.

This Mycobacterium leprae (strain TN) protein is Putative ESAT-6-like protein X.